The primary structure comprises 452 residues: Golgi reassembly-stacking protein 2 (452 aa).

Glycine 2 is lipidated: N-myristoyl glycine. PDZ GRASP-type domains are found at residues 15–105 (EGYH…FCSF) and 111–199 (NVWH…YGYL). The tract at residues 15–215 (EGYHVLRVQE…PFEEGKKISL (201 aa)) is GRASP. Dimethylated arginine is present on residues arginine 30 and arginine 47. Residues 194–199 (IGYGYL) form an important for membrane binding region. Serine 214 is modified (phosphoserine). Threonine 222 and threonine 225 each carry phosphothreonine. A compositionally biased stretch (low complexity) spans 372–424 (PESSSAASSGELLSSLPPTSNAPSDPATTTAKADAASSLTVDVTPPTAKAPTT). Residues 372 to 452 (PESSSAASSG…AVDANASESP (81 aa)) form a disordered region. Serine 409 carries the post-translational modification Phosphoserine. Residues threonine 415 and threonine 433 each carry the phosphothreonine modification. Phosphoserine is present on residues serine 436, serine 441, serine 449, and serine 451.

Belongs to the GORASP family. As to quaternary structure, homodimer. Homooligomer. ER stress induces phosphorylation-dependent monomerization. Interacts with BLZF1/Golgin 45. Identified in a complex with RAB2 and GORASP2. Interacts with JAM2 and JAM3. Interacts with members of the p24 cargo receptors. Interacts with CNIH1 and the cytoplasmic domain of transmembrane TGFA, prior its transit in the trans-Golgi. Interacts with KCTD5. Interacts with TMED2 and TMED3. Interacts with SEC16A in response to ER stress. Interacts (via PDZ GRASP-type 1 domain) with core-glycosylated CFTR in response to ER stress. Post-translationally, myristoylated. Myristoylation is essential for the Golgi targeting. In terms of processing, palmitoylated. Phosphorylated in mitotic cells. ER stress-induced phosphorylation at Ser-441 induces monomerization and subsequent relocalization from Golgi to ER which is essential for mediating unconventional (ER/Golgi-independent) trafficking of CFTR to the cell membrane.

It is found in the golgi apparatus membrane. The protein localises to the endoplasmic reticulum membrane. Its subcellular location is the golgi apparatus. Its function is as follows. Key structural protein of the Golgi apparatus. The membrane cisternae of the Golgi apparatus adhere to each other to form stacks, which are aligned side by side to form the Golgi ribbon. Acting in concert with GORASP1/GRASP65, is required for the formation and maintenance of the Golgi ribbon, and may be dispensable for the formation of stacks. However, other studies suggest that GORASP2 plays a role in the assembly and membrane stacking of the Golgi cisternae, and in the process by which Golgi stacks reform after breakdown during mitosis and meiosis. May regulate the intracellular transport and presentation of a defined set of transmembrane proteins, such as transmembrane TGFA. Required for normal acrosome formation during spermiogenesis and normal male fertility, probably by promoting colocalization of JAM2 and JAM3 at contact sites between germ cells and Sertoli cells. Mediates ER stress-induced unconventional (ER/Golgi-independent) trafficking of core-glycosylated CFTR to cell membrane. The chain is Golgi reassembly-stacking protein 2 (GORASP2) from Homo sapiens (Human).